Here is an 82-residue protein sequence, read N- to C-terminus: Small ribosomal subunit protein bS16 (82 aa).

It belongs to the bacterial ribosomal protein bS16 family.

The protein is Small ribosomal subunit protein bS16 of Vibrio atlanticus (strain LGP32) (Vibrio splendidus (strain Mel32)).